The sequence spans 634 residues: CRISPR-associated protein MJ1674 (634 aa).

In terms of biological role, CRISPR (clustered regularly interspaced short palindromic repeat) is an adaptive immune system that provides protection against mobile genetic elements (viruses, transposable elements and conjugative plasmids). CRISPR clusters contain spacers, sequences complementary to antecedent mobile elements, and target invading nucleic acids. CRISPR clusters are transcribed and processed into CRISPR RNA (crRNA). The type III Csm effector complex binds crRNA and acts as a crRNA-guided RNase, DNase and cyclic oligoadenylate synthase; binding of target RNA cognate to the crRNA is required for all activities. The sequence is that of CRISPR-associated protein MJ1674 from Methanocaldococcus jannaschii (strain ATCC 43067 / DSM 2661 / JAL-1 / JCM 10045 / NBRC 100440) (Methanococcus jannaschii).